The sequence spans 40 residues: Serine proteinase-like BMK-CBP (40 aa).

In terms of domain architecture, Peptidase S1 spans 1–40; the sequence is IFGGTFAKNGEYPWMVVIDLPEFACGGVLISKKFVLTAAH. The Charge relay system role is filled by histidine 40.

It belongs to the peptidase S1 family. In terms of tissue distribution, expressed by the venom gland.

It is found in the secreted. In terms of biological role, binds in a dose-dependent manner to the breast cancer cell line MCF-7. This Olivierus martensii (Manchurian scorpion) protein is Serine proteinase-like BMK-CBP.